A 328-amino-acid polypeptide reads, in one-letter code: Carbonic anhydrase-related protein 11 (328 aa).

The first 23 residues, 1–23 (MGGAARLSAPQALVLWAALGAAA), serve as a signal peptide directing secretion. An Alpha-carbonic anhydrase domain is found at 33-303 (DWWSYKENLQ…LAHRALRGNR (271 aa)). A glycan (N-linked (GlcNAc...) asparagine) is linked at Asn118. The interval 300 to 328 (RGNRDPRHPERRCRGPNYRLHVDGGPHGR) is disordered. Basic and acidic residues predominate over residues 319–328 (LHVDGGPHGR).

It belongs to the alpha-carbonic anhydrase family.

The protein resides in the secreted. In terms of biological role, does not have a catalytic activity. This chain is Carbonic anhydrase-related protein 11 (Ca11), found in Mus musculus (Mouse).